The following is a 648-amino-acid chain: Acetyl-coenzyme A synthetase (648 aa).

CoA is bound by residues 190–193 and Thr-310; that span reads RGGR. Residues 386–388, 410–415, Asp-499, and Arg-514 contribute to the ATP site; these read GEP and DTWWQT. Residue Ser-522 coordinates CoA. Position 525 (Arg-525) interacts with ATP. Residues Val-536, His-538, and Val-541 each coordinate Mg(2+). Arg-583 serves as a coordination point for CoA. Lys-608 bears the N6-acetyllysine mark.

The protein belongs to the ATP-dependent AMP-binding enzyme family. The cofactor is Mg(2+). In terms of processing, acetylated. Deacetylation by the SIR2-homolog deacetylase activates the enzyme.

It carries out the reaction acetate + ATP + CoA = acetyl-CoA + AMP + diphosphate. Catalyzes the conversion of acetate into acetyl-CoA (AcCoA), an essential intermediate at the junction of anabolic and catabolic pathways. AcsA undergoes a two-step reaction. In the first half reaction, AcsA combines acetate with ATP to form acetyl-adenylate (AcAMP) intermediate. In the second half reaction, it can then transfer the acetyl group from AcAMP to the sulfhydryl group of CoA, forming the product AcCoA. This Methylobacterium radiotolerans (strain ATCC 27329 / DSM 1819 / JCM 2831 / NBRC 15690 / NCIMB 10815 / 0-1) protein is Acetyl-coenzyme A synthetase.